We begin with the raw amino-acid sequence, 437 residues long: FK506-binding protein 3 (437 aa).

3 stretches are compositionally biased toward acidic residues: residues 73 to 90 (DIEAEEADELDSEEEEEE), 106 to 131 (EEEEDEDEEDLDIDGSSDEEDDEDVS), and 179 to 220 (ADED…DASD). 2 disordered regions span residues 73-132 (DIEA…DVSE) and 169-349 (HLTG…QTAK). Composition is skewed to basic and acidic residues over residues 256-270 (KKEDKKSVQFTKDLE) and 292-324 (AKKEEPKKEEPKKEQPKKEQPKKEQPKKEEASK). One can recognise a PPIase FKBP-type domain in the interval 351 to 437 (GNKVGIRYIG…TFDIKLVSIK (87 aa)).

It belongs to the FKBP-type PPIase family. FKBP3/4 subfamily.

It is found in the nucleus. Its subcellular location is the nucleolus. It carries out the reaction [protein]-peptidylproline (omega=180) = [protein]-peptidylproline (omega=0). With respect to regulation, inhibited by both FK506 and rapamycin. PPIases accelerate the folding of proteins. It catalyzes the cis-trans isomerization of proline imidic peptide bonds in oligopeptides. The sequence is that of FK506-binding protein 3 (FPR3) from Debaryomyces hansenii (strain ATCC 36239 / CBS 767 / BCRC 21394 / JCM 1990 / NBRC 0083 / IGC 2968) (Yeast).